Consider the following 149-residue polypeptide: 3-dehydroquinate dehydratase (149 aa).

Catalysis depends on Y24, which acts as the Proton acceptor. Residues N75, H81, and D88 each contribute to the substrate site. The active-site Proton donor is the H101. Residues 102-103 (IS) and R112 contribute to the substrate site.

The protein belongs to the type-II 3-dehydroquinase family. In terms of assembly, homododecamer.

The enzyme catalyses 3-dehydroquinate = 3-dehydroshikimate + H2O. Its pathway is metabolic intermediate biosynthesis; chorismate biosynthesis; chorismate from D-erythrose 4-phosphate and phosphoenolpyruvate: step 3/7. Functionally, catalyzes a trans-dehydration via an enolate intermediate. The polypeptide is 3-dehydroquinate dehydratase (Methylobacterium radiotolerans (strain ATCC 27329 / DSM 1819 / JCM 2831 / NBRC 15690 / NCIMB 10815 / 0-1)).